A 197-amino-acid polypeptide reads, in one-letter code: dCTP deaminase, dUMP-forming (197 aa).

Residues 105-110 (RSSMGR), D123, 131-133 (TLE), Q152, Y166, K174, and Q178 each bind dCTP. Residue E133 is the Proton donor/acceptor of the active site.

Belongs to the dCTP deaminase family. As to quaternary structure, homotrimer.

It carries out the reaction dCTP + 2 H2O = dUMP + NH4(+) + diphosphate. Its pathway is pyrimidine metabolism; dUMP biosynthesis; dUMP from dCTP: step 1/1. Its function is as follows. Bifunctional enzyme that catalyzes both the deamination of dCTP to dUTP and the hydrolysis of dUTP to dUMP without releasing the toxic dUTP intermediate. This chain is dCTP deaminase, dUMP-forming, found in Methanosphaera stadtmanae (strain ATCC 43021 / DSM 3091 / JCM 11832 / MCB-3).